Consider the following 351-residue polypeptide: Inositol monophosphatase 3 (351 aa).

A helical transmembrane segment spans residues 11–31 (LGIGVFCLLALGVLYHVYSGF). Mg(2+)-binding residues include E121, D162, L164, D165, and D288. Residue E121 coordinates substrate. Residues 164–167 (LDAT) and D288 contribute to the substrate site.

Belongs to the inositol monophosphatase superfamily. Mg(2+) is required as a cofactor.

Its subcellular location is the membrane. It carries out the reaction a myo-inositol phosphate + H2O = myo-inositol + phosphate. It participates in polyol metabolism; myo-inositol biosynthesis; myo-inositol from D-glucose 6-phosphate: step 2/2. This Xenopus laevis (African clawed frog) protein is Inositol monophosphatase 3 (bpnt2).